Consider the following 337-residue polypeptide: Large ribosomal subunit protein uL3 (337 aa).

The interval 1 to 20 (MASIHRPKRGSLAFSPRKRA) is disordered.

Belongs to the universal ribosomal protein uL3 family. As to quaternary structure, part of the 50S ribosomal subunit. Forms a cluster with proteins L14 and L24e.

One of the primary rRNA binding proteins, it binds directly near the 3'-end of the 23S rRNA, where it nucleates assembly of the 50S subunit. In Methanosarcina barkeri (strain Fusaro / DSM 804), this protein is Large ribosomal subunit protein uL3.